The following is a 499-amino-acid chain: Lysine--tRNA ligase (499 aa).

Mg(2+) is bound by residues Glu408 and Glu415.

It belongs to the class-II aminoacyl-tRNA synthetase family. As to quaternary structure, homodimer. It depends on Mg(2+) as a cofactor.

The protein localises to the cytoplasm. The enzyme catalyses tRNA(Lys) + L-lysine + ATP = L-lysyl-tRNA(Lys) + AMP + diphosphate. This chain is Lysine--tRNA ligase, found in Bacillus cereus (strain ATCC 10987 / NRS 248).